A 241-amino-acid polypeptide reads, in one-letter code: Aspartate/glutamate leucyltransferase (241 aa).

It belongs to the R-transferase family. Bpt subfamily.

It is found in the cytoplasm. It carries out the reaction N-terminal L-glutamyl-[protein] + L-leucyl-tRNA(Leu) = N-terminal L-leucyl-L-glutamyl-[protein] + tRNA(Leu) + H(+). The enzyme catalyses N-terminal L-aspartyl-[protein] + L-leucyl-tRNA(Leu) = N-terminal L-leucyl-L-aspartyl-[protein] + tRNA(Leu) + H(+). In terms of biological role, functions in the N-end rule pathway of protein degradation where it conjugates Leu from its aminoacyl-tRNA to the N-termini of proteins containing an N-terminal aspartate or glutamate. The protein is Aspartate/glutamate leucyltransferase of Helicobacter hepaticus (strain ATCC 51449 / 3B1).